We begin with the raw amino-acid sequence, 685 residues long: Frizzled-8 (685 aa).

The first 27 residues, 1 to 27 (MEWGYLLEVTSLLAALAVLQRSSGAAA), serve as a signal peptide directing secretion. At 28 to 272 (ASAKELACQE…NPFFSQDERA (245 aa)) the chain is on the extracellular side. The FZ domain maps to 30 to 151 (AKELACQEIT…GNPDTLCMDY (122 aa)). 5 disulfide bridges follow: cysteine 35–cysteine 96, cysteine 43–cysteine 89, cysteine 80–cysteine 118, cysteine 107–cysteine 148, and cysteine 111–cysteine 135. Asparagine 49 is a glycosylation site (N-linked (GlcNAc...) asparagine). Residue 71–78 (QFWPLVEI) participates in hexadecanoate binding. The segment at 95-100 (ICLEDY) is wnt-binding. The segment at 147-152 (LCMDYN) is wnt-binding. Asparagine 152 carries N-linked (GlcNAc...) asparagine glycosylation. Residues 155 to 223 (DLTTAAPSPP…KARPPGGGAA (69 aa)) are disordered. Over residues 161 to 176 (PSPPRRLPPPPPPGEQ) the composition is skewed to pro residues. 2 stretches are compositionally biased toward low complexity: residues 177-187 (PPSGSGHSRPP) and 200-223 (GSGDAAAAPPSRGGKARPPGGGAA). The helical transmembrane segment at 273–293 (FTVFWIGLWSVLCFVSTFATV) threads the bilayer. The Cytoplasmic segment spans residues 294-309 (STFLIDMERFKYPERP). Residues 310–330 (IIFLSACYLFVSVGYLVRLVA) form a helical membrane-spanning segment. The Extracellular portion of the chain corresponds to 331 to 394 (GHEKVACSGG…RYETTGPALC (64 aa)). Residues 395–415 (TVVFLLVYFFGMASSIWWVIL) form a helical membrane-spanning segment. At 416–437 (SLTWFLAAGMKWGNEAIAGYSQ) the chain is on the cytoplasmic side. The helical transmembrane segment at 438–458 (YFHLAAWLVPSVKSIAVLALS) threads the bilayer. Over 459 to 481 (SVDGDPVAGICYVGNQSLDNLRG) the chain is Extracellular. N-linked (GlcNAc...) asparagine glycosylation is present at asparagine 473. A helical transmembrane segment spans residues 482–502 (FVLAPLVIYLFIGTMFLLAGF). The Cytoplasmic portion of the chain corresponds to 503–530 (VSLFRIRSVIKQQGGPTKTHKLEKLMIR). Residues 531 to 551 (LGLFTVLYTVPAAVVVACLFY) form a helical membrane-spanning segment. The Extracellular segment spans residues 552–582 (EQHNRPRWEATHNCPCLRDLQPDQARRPDYA). Residues 583–603 (VFMLKYFMCLVVGITSGVWVW) traverse the membrane as a helical segment. Topologically, residues 604–685 (SGKTLESWRA…YPKQMPLSQV (82 aa)) are cytoplasmic. Positions 606–611 (KTLESW) match the Lys-Thr-X-X-X-Trp motif, mediates interaction with the PDZ domain of Dvl family members motif. Gly residues predominate over residues 631–655 (AGGSGPGGSGPGPGGGGGHGGGGGS). The tract at residues 631 to 656 (AGGSGPGGSGPGPGGGGGHGGGGGSL) is disordered. The PDZ-binding motif lies at 683–685 (SQV).

The protein belongs to the G-protein coupled receptor Fz/Smo family. In terms of assembly, component of a Wnt-signaling complex that contains a WNT protein, a FZD protein and LRP5 or LRP6. Interacts directly with LRP5 or LRP6; the interaction is promoted by Wnt-binding and signaling and inhibited by DKK1. Interacts (via the PDZ-binding motif) with GPOC (via its PDZ domain). Interacts with RSPO1 and RSPO3. Interacts with glypican GPC3. Post-translationally, ubiquitinated by ZNRF3, leading to its degradation by the proteasome. As to expression, expressed in chondrocytes.

The protein resides in the membrane. It localises to the golgi apparatus. The protein localises to the cell membrane. Receptor for Wnt proteins. Component of the Wnt-Fzd-LRP5-LRP6 complex that triggers beta-catenin signaling through inducing aggregation of receptor-ligand complexes into ribosome-sized signalosomes. The beta-catenin canonical signaling pathway leads to the activation of disheveled proteins, inhibition of GSK-3 kinase, nuclear accumulation of beta-catenin and activation of Wnt target genes. A second signaling pathway involving PKC and calcium fluxes has been seen for some family members, but it is not yet clear if it represents a distinct pathway or if it can be integrated in the canonical pathway, as PKC seems to be required for Wnt-mediated inactivation of GSK-3 kinase. Both pathways seem to involve interactions with G-proteins. May be involved in transduction and intercellular transmission of polarity information during tissue morphogenesis and/or in differentiated tissues. Coreceptor along with RYK of Wnt proteins, such as WNT1. This Mus musculus (Mouse) protein is Frizzled-8 (Fzd8).